A 121-amino-acid polypeptide reads, in one-letter code: UPF0344 protein BCG9842_B4136 (121 aa).

4 helical membrane-spanning segments follow: residues 6 to 26 (ITAW…YSAG), 38 to 58 (LMYI…VKTA), 65 to 85 (WYGL…MVLV), and 92 to 112 (PTGA…YLGL).

The protein belongs to the UPF0344 family.

Its subcellular location is the cell membrane. In Bacillus cereus (strain G9842), this protein is UPF0344 protein BCG9842_B4136.